The chain runs to 185 residues: Prorelaxin 1 (185 aa).

Residues 1-22 (MSSRFLLQLLGFWLLLSQPCRT) form the signal peptide. Disulfide bonds link Cys36–Cys171, Cys48–Cys185, and Cys170–Cys175. A propeptide spans 58–156 (SQEEPALLAR…LKYLQSDTHS (99 aa)) (connecting peptide). Residues 135–161 (RLGEAEDGSPPGLKYLQSDTHSRKKRE) are disordered.

This sequence belongs to the insulin family. In terms of assembly, heterodimer of a B chain and an A chain linked by two disulfide bonds.

It localises to the secreted. Its function is as follows. Relaxin is an ovarian hormone that acts with estrogen to produce dilatation of the birth canal in many mammals. The sequence is that of Prorelaxin 1 (Rln1) from Mus musculus (Mouse).